We begin with the raw amino-acid sequence, 234 residues long: Probable transcriptional regulatory protein PSPTO_3162 (234 aa).

The protein belongs to the TACO1 family.

Its subcellular location is the cytoplasm. The chain is Probable transcriptional regulatory protein PSPTO_3162 from Pseudomonas syringae pv. tomato (strain ATCC BAA-871 / DC3000).